The primary structure comprises 248 residues: DNA repair protein RecO (248 aa).

It belongs to the RecO family.

Its function is as follows. Involved in DNA repair and RecF pathway recombination. The chain is DNA repair protein RecO from Thermoanaerobacter sp. (strain X514).